Reading from the N-terminus, the 616-residue chain is Chaperone protein HscA homolog (616 aa).

It belongs to the heat shock protein 70 family.

Its function is as follows. Chaperone involved in the maturation of iron-sulfur cluster-containing proteins. Has a low intrinsic ATPase activity which is markedly stimulated by HscB. The sequence is that of Chaperone protein HscA homolog from Tolumonas auensis (strain DSM 9187 / NBRC 110442 / TA 4).